Here is a 115-residue protein sequence, read N- to C-terminus: UPF0597 protein HI_0855 (115 aa).

It belongs to the UPF0597 family.

The protein is UPF0597 protein HI_0855 of Haemophilus influenzae (strain ATCC 51907 / DSM 11121 / KW20 / Rd).